The following is a 769-amino-acid chain: Endothelin-converting enzyme 1 (769 aa).

Topologically, residues 1 to 67 (MRTVWSPLAA…WAARTSVEKR (67 aa)) are cytoplasmic. A Phosphothreonine modification is found at Thr-24. Residues 68-88 (LVVLVTLLAAGLVACLAALGI) traverse the membrane as a helical; Signal-anchor for type II membrane protein segment. Over 89 to 769 (QYQTRTPPVC…MNPHHKCEVW (681 aa)) the chain is Extracellular. Residues 97–769 (VCLTEACVSV…MNPHHKCEVW (673 aa)) form the Peptidase M13 domain. Intrachain disulfides connect Cys-98–Cys-103, Cys-121–Cys-754, Cys-129–Cys-714, Cys-184–Cys-434, and Cys-643–Cys-766. N-linked (GlcNAc...) asparagine glycosylation is found at Asn-165, Asn-186, Asn-209, Asn-269, Asn-315, Asn-361, Asn-382, and Asn-538. His-606 is a Zn(2+) binding site. Glu-607 is a catalytic residue. His-610 is a binding site for Zn(2+). N-linked (GlcNAc...) asparagine glycosylation is found at Asn-631 and Asn-650. Zn(2+) is bound at residue Glu-666. Asp-670 functions as the Proton donor in the catalytic mechanism.

The protein belongs to the peptidase M13 family. Homodimer; disulfide-linked. Interacts with PPP1R16B. Interacts with TSPAN8; this interaction recruits the endothelin converting enzyme ECE1 to tetraspanin-enriched microdomains and positively modulates its enzymatic activity. Zn(2+) serves as cofactor.

Its subcellular location is the cell membrane. It carries out the reaction Hydrolysis of the 21-Trp-|-Val-22 bond in big endothelin to form endothelin 1.. Inhibited by phosphoramidon. Its function is as follows. Converts big endothelin-1 to endothelin-1. The polypeptide is Endothelin-converting enzyme 1 (Ece1) (Mus musculus (Mouse)).